Reading from the N-terminus, the 354-residue chain is 3-dehydroquinate synthase (354 aa).

NAD(+)-binding positions include 100–104 (GATGD), 124–125 (TT), Lys136, Lys145, and 163–166 (FLKT). Residues Glu178, His242, and His256 each contribute to the Zn(2+) site.

The protein belongs to the sugar phosphate cyclases superfamily. Dehydroquinate synthase family. Requires NAD(+) as cofactor. Co(2+) is required as a cofactor. It depends on Zn(2+) as a cofactor.

The protein resides in the cytoplasm. The enzyme catalyses 7-phospho-2-dehydro-3-deoxy-D-arabino-heptonate = 3-dehydroquinate + phosphate. Its pathway is metabolic intermediate biosynthesis; chorismate biosynthesis; chorismate from D-erythrose 4-phosphate and phosphoenolpyruvate: step 2/7. Catalyzes the conversion of 3-deoxy-D-arabino-heptulosonate 7-phosphate (DAHP) to dehydroquinate (DHQ). The chain is 3-dehydroquinate synthase from Staphylococcus aureus (strain COL).